Here is a 147-residue protein sequence, read N- to C-terminus: Ponticulin-like protein C1 (147 aa).

Positions 1 to 20 (MKFTKSLLLLIVAVFASSNA) are cleaved as a signal peptide. Asn118 is lipidated: GPI-like-anchor amidated asparagine. An N-linked (GlcNAc...) asparagine glycan is attached at Asn118. Residues 119–147 (SSESDSSDSTRIGASFALAASVLLSMLAI) constitute a propeptide, removed in mature form.

It belongs to the ponticulin family. In terms of processing, the GPI-like-anchor contains a phosphoceramide group, rather than a phosphatidyl group.

The protein resides in the cell membrane. The chain is Ponticulin-like protein C1 (ponC1) from Dictyostelium discoideum (Social amoeba).